The following is a 738-amino-acid chain: Catalase-peroxidase 2 (738 aa).

A signal peptide spans 1 to 26 (MKRTLPTLSALALSMSLALAAGQTQA). A cross-link (tryptophyl-tyrosyl-methioninium (Trp-Tyr) (with M-252)) is located at residues 104 to 226 (WHSAGVYRIF…LGATQMGLIY (123 aa)). H105 functions as the Proton acceptor in the catalytic mechanism. The tryptophyl-tyrosyl-methioninium (Tyr-Met) (with W-104) cross-link spans 226–252 (YVNPEGPNGVPDPLAAARDIRETFGRM). H267 contributes to the heme b binding site.

The protein belongs to the peroxidase family. Peroxidase/catalase subfamily. Homodimer or homotetramer. Requires heme b as cofactor. In terms of processing, formation of the three residue Trp-Tyr-Met cross-link is important for the catalase, but not the peroxidase activity of the enzyme.

It catalyses the reaction H2O2 + AH2 = A + 2 H2O. The catalysed reaction is 2 H2O2 = O2 + 2 H2O. Its function is as follows. Bifunctional enzyme with both catalase and broad-spectrum peroxidase activity. The sequence is that of Catalase-peroxidase 2 from Shewanella amazonensis (strain ATCC BAA-1098 / SB2B).